A 120-amino-acid chain; its full sequence is Seminal plasma protein HSP-1 (120 aa).

A run of 2 repeats spans residues Asp-1–Val-13 and Asp-16–Val-28. The segment at Asp-1–Val-28 is 2 X approximate repeats. 4 O-linked (GalNAc...) threonine glycosylation sites follow: Thr-5, Thr-12, Thr-22, and Thr-27. 2 consecutive Fibronectin type-II domains span residues Thr-29–Ala-73 and Thr-74–Cys-120. 4 cysteine pairs are disulfide-bonded: Cys-34–Cys-58, Cys-48–Cys-71, Cys-79–Cys-105, and Cys-93–Cys-120.

Belongs to the seminal plasma protein family. One glycoform exists as a monomer while the other forms a heterotetramer with HSP-2 and binds heparin. O-glycosylated on Thr. There are two forms of HSP-1 which probably differ in the amount of sialylation of polysaccharide. In terms of tissue distribution, major component of seminal plasma.

It localises to the secreted. Functionally, could enhance the fertilizing capacity of spermatozoa upon interaction with heparin-like glycosaminoglycans present in the female genital tract. This is Seminal plasma protein HSP-1 from Equus caballus (Horse).